A 1312-amino-acid polypeptide reads, in one-letter code: Probable histone-lysine N-methyltransferase lin-59 (1312 aa).

Polar residues-rich tracts occupy residues 1–11 (MHGAGEQQQRY) and 25–36 (STSSHQYQQQGA). 5 disordered regions span residues 1-41 (MHGA…QMHQ), 54-81 (TTTS…RQQG), 154-223 (QPSG…KPVD), 312-435 (EESK…PPPV), and 524-556 (KDNI…EPSE). Over residues 54-68 (TTTSAAASTSSSGGS) the composition is skewed to low complexity. Over residues 69 to 78 (NSSGGSGGHR) the composition is skewed to gly residues. Over residues 160–176 (PMSSNAPATTSSATPDS) the composition is skewed to low complexity. Positions 200 to 210 (DHDDEEDDDGP) are enriched in acidic residues. Residues 312–321 (EESKKKKDME) are compositionally biased toward basic and acidic residues. Positions 344–367 (ATRSTNSPDVTTSNLPEEPSTSTM) are enriched in polar residues. Residues 371 to 382 (KENEDVEKVEGK) show a composition bias toward basic and acidic residues. The span at 383–394 (RRGRKPKKRRGF) shows a compositional bias: basic residues. Composition is skewed to basic and acidic residues over residues 395–419 (HKES…DHLP) and 524–535 (KDNIKKEVKEES). The 46-residue stretch at 590–635 (APSLTCGCTKGACTSDMDCLNRALRVQCSSDCSVPYCSNRRFWKED) folds into the AWS domain. Residues 638–750 (NKLCVSNGPR…PNAEITVDKS (113 aa)) enclose the SET domain. The interval 913–934 (DNAPRARALSTSCPSPVPSKRG) is disordered. The segment at 967-1027 (AVRCICGALD…EYICDFCTNK (61 aa)) adopts a PHD-type zinc-finger fold. The BAH domain maps to 1100-1223 (NKYRFPKAAT…KTQRVFEKVP (124 aa)). The tract at residues 1248 to 1295 (RDFRPYDPSNPSPKPPKTSSIPSTSSIDPPQSSSDGLPEVDTKKLSKR) is disordered. Residues 1264–1281 (KTSSIPSTSSIDPPQSSS) show a composition bias toward low complexity.

The protein belongs to the class V-like SAM-binding methyltransferase superfamily. Histone-lysine methyltransferase family. SET2 subfamily. In terms of tissue distribution, widely expressed throughout embryonic development and into adulthood.

The protein localises to the nucleus. The enzyme catalyses L-lysyl-[histone] + S-adenosyl-L-methionine = N(6)-methyl-L-lysyl-[histone] + S-adenosyl-L-homocysteine + H(+). Probable histone methyltransferase. Essential protein required to maintain expression of homeotic genes egl-5 and mab-5. May play an analogous role to the trithorax Group (trxG) proteins. TrxG proteins form multiprotein complexes that are required to maintain the transcriptionally active state of homeotic genes throughout development. May act via a modification of chromatin. The polypeptide is Probable histone-lysine N-methyltransferase lin-59 (lin-59) (Caenorhabditis elegans).